The chain runs to 1366 residues: Serine/threonine-protein kinase RUNKEL (1366 aa).

ATP-binding positions include 10-18 and K33; that span reads IGHGKCSTV. The active-site Proton acceptor is D121. Disordered stretches follow at residues 276–356, 367–386, 398–502, and 524–549; these read TKPC…VNIL, QKEN…NENC, LDFD…DSSK, and PSRK…FSKK. Over residues 283–302 the composition is skewed to basic and acidic residues; it reads RNGDRPNKTPPKYREKDRKG. Positions 304–313 are enriched in polar residues; sequence SKQNENSIQG. Residues 367–376 show a composition bias toward basic and acidic residues; that stretch reads QKENEKENYR. A compositionally biased stretch (acidic residues) spans 398-414; sequence LDFDENNDDEGPDESEG. A compositionally biased stretch (basic and acidic residues) spans 422 to 433; that stretch reads QEERVMSHNENH. Residues 438–454 are compositionally biased toward polar residues; sequence VVSSNVPDENSSANETP. HEAT repeat units follow at residues 595–633, 638–675, 699–737, 835–872, 878–907, 908–945, 946–986, 992–1018, 1019–1057, 1072–1111, 1279–1316, and 1329–1366; these read LTNG…HSTS, LANS…YIST, QVSN…QGAY, TEEK…NSRR, FCNA…AFVN, VIAS…RAPV, KTNA…LVEA, DDFR…NGEI, IIRE…LLTE, ISNS…IKIS, TNLP…YACK, and GHDV…RLPR.

The protein belongs to the protein kinase superfamily. Ser/Thr protein kinase family. In terms of assembly, binds to microtubules (MT). In terms of tissue distribution, expressed in proliferating tissues of seedlings, lateral roots, young rosette leaves, siliques, flowers, embryos and stems (including apical meristem).

Its subcellular location is the cytoplasm. It is found in the cytoskeleton. The protein localises to the phragmoplast. The protein resides in the spindle. It catalyses the reaction L-seryl-[protein] + ATP = O-phospho-L-seryl-[protein] + ADP + H(+). The catalysed reaction is L-threonyl-[protein] + ATP = O-phospho-L-threonyl-[protein] + ADP + H(+). Its function is as follows. Essential protein that regulates phragmoplast microtubule organization during cell plate expansion in cytokinesis during cell division, both somatic and syncytial. Required for endosperm cellularisation. In pollen development, involved in cellularisation during microsporogenesis by regulating radial microtubules (MT) organization in microspore mother cells. Seems to not have kinase activity. In Arabidopsis thaliana (Mouse-ear cress), this protein is Serine/threonine-protein kinase RUNKEL.